The following is a 433-amino-acid chain: Trigger factor (433 aa).

The PPIase FKBP-type domain occupies N161–P246.

Belongs to the FKBP-type PPIase family. Tig subfamily.

It localises to the cytoplasm. It carries out the reaction [protein]-peptidylproline (omega=180) = [protein]-peptidylproline (omega=0). In terms of biological role, involved in protein export. Acts as a chaperone by maintaining the newly synthesized protein in an open conformation. Functions as a peptidyl-prolyl cis-trans isomerase. This is Trigger factor from Haemophilus ducreyi (strain 35000HP / ATCC 700724).